The chain runs to 115 residues: UPF0738 protein SE_0694 (115 aa).

The protein belongs to the UPF0738 family.

The protein is UPF0738 protein SE_0694 of Staphylococcus epidermidis (strain ATCC 12228 / FDA PCI 1200).